A 375-amino-acid polypeptide reads, in one-letter code: Cell division protein ZapE (375 aa).

ATP is bound at residue G78–T85.

This sequence belongs to the AFG1 ATPase family. ZapE subfamily. In terms of assembly, interacts with FtsZ.

The protein localises to the cytoplasm. Functionally, reduces the stability of FtsZ polymers in the presence of ATP. This is Cell division protein ZapE from Escherichia coli O157:H7.